Consider the following 97-residue polypeptide: ESAT-6-like protein EsxG (97 aa).

This sequence belongs to the WXG100 family. CFP-10 subfamily. Forms a tight 1:1 complex with EsxH.

The protein resides in the secreted. The sequence is that of ESAT-6-like protein EsxG from Mycolicibacterium smegmatis (strain ATCC 700084 / mc(2)155) (Mycobacterium smegmatis).